We begin with the raw amino-acid sequence, 227 residues long: Cytidylate kinase (227 aa).

10–18 (GPASSGKST) provides a ligand contact to ATP.

The protein belongs to the cytidylate kinase family. Type 1 subfamily.

It localises to the cytoplasm. It carries out the reaction CMP + ATP = CDP + ADP. The enzyme catalyses dCMP + ATP = dCDP + ADP. This is Cytidylate kinase from Streptococcus mutans serotype c (strain ATCC 700610 / UA159).